The sequence spans 200 residues: Large ribosomal subunit protein uL22c (200 aa).

The protein belongs to the universal ribosomal protein uL22 family. As to quaternary structure, part of the 50S ribosomal subunit.

It localises to the plastid. The protein localises to the chloroplast. Functionally, this protein binds specifically to 23S rRNA. Its function is as follows. The globular domain of the protein is located near the polypeptide exit tunnel on the outside of the subunit, while an extended beta-hairpin is found that lines the wall of the exit tunnel in the center of the 70S ribosome. The protein is Large ribosomal subunit protein uL22c (rpl22) of Medicago sativa (Alfalfa).